The chain runs to 250 residues: NAD(P)H-quinone oxidoreductase subunit K (250 aa).

Residues cysteine 60, cysteine 61, cysteine 125, and cysteine 156 each contribute to the [4Fe-4S] cluster site. Residues 230–250 (ELNTPEIDVSPASQSSSTYES) form a disordered region. The span at 240-250 (PASQSSSTYES) shows a compositional bias: polar residues.

This sequence belongs to the complex I 20 kDa subunit family. NDH-1 can be composed of about 15 different subunits; different subcomplexes with different compositions have been identified which probably have different functions. [4Fe-4S] cluster is required as a cofactor.

The protein localises to the cellular thylakoid membrane. The catalysed reaction is a plastoquinone + NADH + (n+1) H(+)(in) = a plastoquinol + NAD(+) + n H(+)(out). The enzyme catalyses a plastoquinone + NADPH + (n+1) H(+)(in) = a plastoquinol + NADP(+) + n H(+)(out). Its function is as follows. NDH-1 shuttles electrons from an unknown electron donor, via FMN and iron-sulfur (Fe-S) centers, to quinones in the respiratory and/or the photosynthetic chain. The immediate electron acceptor for the enzyme in this species is believed to be plastoquinone. Couples the redox reaction to proton translocation, and thus conserves the redox energy in a proton gradient. Cyanobacterial NDH-1 also plays a role in inorganic carbon-concentration. The protein is NAD(P)H-quinone oxidoreductase subunit K of Prochlorococcus marinus (strain MIT 9313).